Consider the following 743-residue polypeptide: Phosphoribosylformylglycinamidine synthase subunit PurL (743 aa).

The active site involves His-54. Residues Tyr-57 and Lys-96 each contribute to the ATP site. A Mg(2+)-binding site is contributed by Glu-98. Substrate-binding positions include 99–102 (SHNH) and Arg-121. Catalysis depends on His-100, which acts as the Proton acceptor. Position 122 (Asp-122) interacts with Mg(2+). Gln-245 contacts substrate. Asp-273 is a binding site for Mg(2+). Position 317 to 319 (317 to 319 (ESQ)) interacts with substrate. ATP-binding residues include Asp-500 and Gly-537. Asn-538 is a Mg(2+) binding site. Ser-540 lines the substrate pocket.

It belongs to the FGAMS family. As to quaternary structure, monomer. Part of the FGAM synthase complex composed of 1 PurL, 1 PurQ and 2 PurS subunits.

The protein localises to the cytoplasm. The enzyme catalyses N(2)-formyl-N(1)-(5-phospho-beta-D-ribosyl)glycinamide + L-glutamine + ATP + H2O = 2-formamido-N(1)-(5-O-phospho-beta-D-ribosyl)acetamidine + L-glutamate + ADP + phosphate + H(+). The protein operates within purine metabolism; IMP biosynthesis via de novo pathway; 5-amino-1-(5-phospho-D-ribosyl)imidazole from N(2)-formyl-N(1)-(5-phospho-D-ribosyl)glycinamide: step 1/2. In terms of biological role, part of the phosphoribosylformylglycinamidine synthase complex involved in the purines biosynthetic pathway. Catalyzes the ATP-dependent conversion of formylglycinamide ribonucleotide (FGAR) and glutamine to yield formylglycinamidine ribonucleotide (FGAM) and glutamate. The FGAM synthase complex is composed of three subunits. PurQ produces an ammonia molecule by converting glutamine to glutamate. PurL transfers the ammonia molecule to FGAR to form FGAM in an ATP-dependent manner. PurS interacts with PurQ and PurL and is thought to assist in the transfer of the ammonia molecule from PurQ to PurL. The sequence is that of Phosphoribosylformylglycinamidine synthase subunit PurL from Bacillus pumilus (strain SAFR-032).